Here is a 130-residue protein sequence, read N- to C-terminus: DNA-directed RNA polymerase subunit omega (130 aa).

2 disordered regions span residues 80 to 99 and 110 to 130; these read PEPD…DADD and EELL…EEDE. A compositionally biased stretch (basic and acidic residues) spans 110–124; it reads EELLKGLEGLAPREE.

Belongs to the RNA polymerase subunit omega family. In terms of assembly, the RNAP catalytic core consists of 2 alpha, 1 beta, 1 beta' and 1 omega subunit. When a sigma factor is associated with the core the holoenzyme is formed, which can initiate transcription.

It carries out the reaction RNA(n) + a ribonucleoside 5'-triphosphate = RNA(n+1) + diphosphate. In terms of biological role, promotes RNA polymerase assembly. Latches the N- and C-terminal regions of the beta' subunit thereby facilitating its interaction with the beta and alpha subunits. The sequence is that of DNA-directed RNA polymerase subunit omega from Nitrobacter hamburgensis (strain DSM 10229 / NCIMB 13809 / X14).